The following is an 891-amino-acid chain: Translation initiation factor IF-2 (891 aa).

Residues 390–559 enclose the tr-type G domain; the sequence is NRAPIVTIMG…LLQSDMLELK (170 aa). The G1 stretch occupies residues 399 to 406; it reads GHVDHGKT. 399-406 provides a ligand contact to GTP; the sequence is GHVDHGKT. The tract at residues 424 to 428 is G2; it reads GITQS. The tract at residues 445 to 448 is G3; it reads DTPG. Residues 445–449 and 499–502 each bind GTP; these read DTPGH and NKID. The tract at residues 499–502 is G4; it reads NKID. The G5 stretch occupies residues 535 to 537; that stretch reads SAT.

This sequence belongs to the TRAFAC class translation factor GTPase superfamily. Classic translation factor GTPase family. IF-2 subfamily.

Its subcellular location is the cytoplasm. Functionally, one of the essential components for the initiation of protein synthesis. Protects formylmethionyl-tRNA from spontaneous hydrolysis and promotes its binding to the 30S ribosomal subunits. Also involved in the hydrolysis of GTP during the formation of the 70S ribosomal complex. The protein is Translation initiation factor IF-2 of Blochmanniella pennsylvanica (strain BPEN).